Here is a 450-residue protein sequence, read N- to C-terminus: Ribosomal protein uS12 methylthiotransferase RimO (450 aa).

The MTTase N-terminal domain occupies 7 to 123; sequence QKVSMVSLGC…IAEILAEKSG (117 aa). Cys-16, Cys-52, Cys-86, Cys-161, Cys-165, and Cys-168 together coordinate [4Fe-4S] cluster. Residues 147–377 form the Radical SAM core domain; sequence SSPAWFSYLK…MRIQARLSFK (231 aa). The TRAM domain maps to 380-448; that stretch reads RELIGTTEQV…DYDLIGEIQE (69 aa).

This sequence belongs to the methylthiotransferase family. RimO subfamily. [4Fe-4S] cluster is required as a cofactor.

The protein resides in the cytoplasm. It carries out the reaction L-aspartate(89)-[ribosomal protein uS12]-hydrogen + (sulfur carrier)-SH + AH2 + 2 S-adenosyl-L-methionine = 3-methylsulfanyl-L-aspartate(89)-[ribosomal protein uS12]-hydrogen + (sulfur carrier)-H + 5'-deoxyadenosine + L-methionine + A + S-adenosyl-L-homocysteine + 2 H(+). Its function is as follows. Catalyzes the methylthiolation of an aspartic acid residue of ribosomal protein uS12. The polypeptide is Ribosomal protein uS12 methylthiotransferase RimO (Pelobacter propionicus (strain DSM 2379 / NBRC 103807 / OttBd1)).